The chain runs to 329 residues: Ribosomal RNA small subunit methyltransferase H (329 aa).

S-adenosyl-L-methionine contacts are provided by residues 39–41, Asp56, Phe85, Asp106, and Gln113; that span reads GGY. The tract at residues 289–308 is disordered; sequence SGAIRPTPEEEARNPRARSA.

The protein belongs to the methyltransferase superfamily. RsmH family.

The protein resides in the cytoplasm. The enzyme catalyses cytidine(1402) in 16S rRNA + S-adenosyl-L-methionine = N(4)-methylcytidine(1402) in 16S rRNA + S-adenosyl-L-homocysteine + H(+). Its function is as follows. Specifically methylates the N4 position of cytidine in position 1402 (C1402) of 16S rRNA. The protein is Ribosomal RNA small subunit methyltransferase H of Novosphingobium aromaticivorans (strain ATCC 700278 / DSM 12444 / CCUG 56034 / CIP 105152 / NBRC 16084 / F199).